A 546-amino-acid chain; its full sequence is Chaperonin GroEL (546 aa).

ATP-binding positions include threonine 29–proline 32, lysine 50, aspartate 86–threonine 90, glycine 414, and aspartate 492.

The protein belongs to the chaperonin (HSP60) family. In terms of assembly, forms a cylinder of 14 subunits composed of two heptameric rings stacked back-to-back. Interacts with the co-chaperonin GroES.

It localises to the cytoplasm. It catalyses the reaction ATP + H2O + a folded polypeptide = ADP + phosphate + an unfolded polypeptide.. In terms of biological role, together with its co-chaperonin GroES, plays an essential role in assisting protein folding. The GroEL-GroES system forms a nano-cage that allows encapsulation of the non-native substrate proteins and provides a physical environment optimized to promote and accelerate protein folding. This is Chaperonin GroEL from Helicobacter pylori (strain Shi470).